The following is a 250-amino-acid chain: 5'-nucleotidase SurE (250 aa).

A divalent metal cation is bound by residues Asp-8, Asp-9, Ser-39, and Asn-95.

Belongs to the SurE nucleotidase family. Requires a divalent metal cation as cofactor.

It is found in the cytoplasm. The catalysed reaction is a ribonucleoside 5'-phosphate + H2O = a ribonucleoside + phosphate. Its function is as follows. Nucleotidase that shows phosphatase activity on nucleoside 5'-monophosphates. The chain is 5'-nucleotidase SurE from Syntrophobacter fumaroxidans (strain DSM 10017 / MPOB).